A 494-amino-acid chain; its full sequence is DnaJ homolog subfamily C member 7 (494 aa).

Position 2 is an N-acetylalanine (Ala2). 8 TPR repeats span residues 28 to 61 (AESF…CPNN), 62 to 95 (ASYY…DDSF), 96 to 129 (VRGH…DHKN), 142 to 175 (VMEY…APAC), 210 to 243 (ADAL…APDH), 256 to 289 (LKAK…DPNN), 294 to 327 (AKLY…DDTY), and 328 to 361 (IKAY…EKTK). In terms of domain architecture, J spans 381–451 (DYYKILGVDK…KKKTRYDSGQ (71 aa)). Ser393 carries the phosphoserine modification.

Associates with complexes containing chaperones HSP70 and HSP90. Interacts with the GAP domain of NF1. Interacts with HSP90AA1. Interacts with HSPA1A/B; the interaction is enhanced by ATP. Interacts with HSP90AB1. Interacts with PGR. Interacts with RAD9A; the interaction is interrupted by UV and heat shock treatments. Interacts with HUS1 and RAD1. Interacts with NR1I3; this complex may also include HSP90 Interacts with HSPA8. In terms of tissue distribution, widely expressed with high levels in liver, skeletal muscle, kidney and testis.

Its subcellular location is the cytoplasm. The protein localises to the nucleus. The protein resides in the cytoskeleton. Functionally, acts as a co-chaperone regulating the molecular chaperones HSP70 and HSP90 in folding of steroid receptors, such as the glucocorticoid receptor and the progesterone receptor. Proposed to act as a recycling chaperone by facilitating the return of chaperone substrates to early stages of chaperoning if further folding is required. In vitro, induces ATP-independent dissociation of HSP90 but not of HSP70 from the chaperone-substrate complexes. Recruits NR1I3 to the cytoplasm. This is DnaJ homolog subfamily C member 7 (Dnajc7) from Mus musculus (Mouse).